Consider the following 627-residue polypeptide: tRNA uridine 5-carboxymethylaminomethyl modification enzyme MnmG (627 aa).

Residues Gly-13–Gly-18, Val-125, and Ser-180 contribute to the FAD site. Gly-274–Phe-288 is an NAD(+) binding site. Gln-371 is a binding site for FAD.

Belongs to the MnmG family. In terms of assembly, homodimer. Heterotetramer of two MnmE and two MnmG subunits. The cofactor is FAD.

It is found in the cytoplasm. Its function is as follows. NAD-binding protein involved in the addition of a carboxymethylaminomethyl (cmnm) group at the wobble position (U34) of certain tRNAs, forming tRNA-cmnm(5)s(2)U34. The chain is tRNA uridine 5-carboxymethylaminomethyl modification enzyme MnmG from Francisella tularensis subsp. tularensis (strain FSC 198).